The primary structure comprises 164 residues: Zinc finger protein ZAT8 (164 aa).

C2H2-type zinc fingers lie at residues 37 to 59 (FRCK…RASH) and 85 to 107 (HPCP…MRRH).

The protein resides in the nucleus. In terms of biological role, probable transcription factor that may be involved in stress responses. The protein is Zinc finger protein ZAT8 (ZAT8) of Arabidopsis thaliana (Mouse-ear cress).